The following is a 327-amino-acid chain: Eukaryotic translation initiation factor 3 subunit I (327 aa).

5 WD repeats span residues 8-49 (GHER…GSYD), 51-89 (HNGA…CLYT), 188-227 (VHRY…KLKQ), 229-268 (KSER…GHFE), and 285-324 (GHFG…LGFT).

The protein belongs to the eIF-3 subunit I family. In terms of assembly, component of the eukaryotic translation initiation factor 3 (eIF-3) complex.

Its subcellular location is the cytoplasm. Its function is as follows. Component of the eukaryotic translation initiation factor 3 (eIF-3) complex, which is involved in protein synthesis of a specialized repertoire of mRNAs and, together with other initiation factors, stimulates binding of mRNA and methionyl-tRNAi to the 40S ribosome. The eIF-3 complex specifically targets and initiates translation of a subset of mRNAs involved in cell proliferation. The polypeptide is Eukaryotic translation initiation factor 3 subunit I (Caenorhabditis elegans).